The sequence spans 137 residues: Transcription antitermination protein NusB (137 aa).

It belongs to the NusB family.

Involved in transcription antitermination. Required for transcription of ribosomal RNA (rRNA) genes. Binds specifically to the boxA antiterminator sequence of the ribosomal RNA (rrn) operons. This Clavibacter sepedonicus (Clavibacter michiganensis subsp. sepedonicus) protein is Transcription antitermination protein NusB.